Consider the following 187-residue polypeptide: Cerebral dopamine neurotrophic factor (187 aa).

An N-terminal signal peptide occupies residues 1–24; it reads MRCISPTALVTFCAGFCISNPVLA. Disulfide bonds link Cys-37/Cys-124, Cys-40/Cys-113, and Cys-71/Cys-82.

Belongs to the ARMET family. As to expression, expressed at high levels in the heart, skeletal muscle, testis and brain (at protein level). In the brain, detected in the cerebral cortex neurons through layers II to VI. In the hippocampus, detected in the CA1 to CA3 pyramidal regions and in the granule and polymorph layers of dentate gyrus. Weak expression in the striatum. In substantia nigra, detected in solitary cells that did not express tyrosine hydroxylase, a marker for dopaminergic neurons. Relatively high expression in the Purkinje cells of the cerebellum and in regions of the brain stem, including the locus coeruleus.

It localises to the secreted. Its function is as follows. Trophic factor for dopamine neurons. Prevents the 6-hydroxydopamine (6-OHDA)-induced degeneration of dopaminergic neurons. When administered after 6-OHDA-lesioning, restores the dopaminergic function and prevents the degeneration of dopaminergic neurons in substantia nigra. The polypeptide is Cerebral dopamine neurotrophic factor (Cdnf) (Mus musculus (Mouse)).